The sequence spans 205 residues: Cerebellin-3 (205 aa).

Positions 1–32 (MLGAKPHWLPGPLHSPGLPLVLVLLALGAGWA) are cleaved as a signal peptide. Residues 67–205 (APPGRVAFAA…SFSGFLIFPL (139 aa)) enclose the C1q domain. The segment at 72–205 (VAFAAVRSHH…SFSGFLIFPL (134 aa)) is necessary for interaction with CBLN3, and homotrimerization. Asn-90 is a glycosylation site (N-linked (GlcNAc...) asparagine).

In terms of assembly, heterohexamer; disulfide-linked heterotrimers. Interacts with CBLN1. May also form oligomers with CBLN2 and CBLN4.

It is found in the endoplasmic reticulum. It localises to the golgi apparatus. The protein localises to the cis-Golgi network. The protein resides in the secreted. Its subcellular location is the synapse. Functionally, may be involved in synaptic functions in the CNS. The sequence is that of Cerebellin-3 (CBLN3) from Homo sapiens (Human).